The chain runs to 120 residues: NAD(P)H-quinone oxidoreductase subunit 3 (120 aa).

Helical transmembrane passes span 10–30 (FLGF…TNLI), 64–84 (MFAL…PWAV), and 89–109 (LGLL…IALA).

The protein belongs to the complex I subunit 3 family. As to quaternary structure, NDH-1 can be composed of about 15 different subunits; different subcomplexes with different compositions have been identified which probably have different functions.

It is found in the cellular thylakoid membrane. It catalyses the reaction a plastoquinone + NADH + (n+1) H(+)(in) = a plastoquinol + NAD(+) + n H(+)(out). The catalysed reaction is a plastoquinone + NADPH + (n+1) H(+)(in) = a plastoquinol + NADP(+) + n H(+)(out). NDH-1 shuttles electrons from an unknown electron donor, via FMN and iron-sulfur (Fe-S) centers, to quinones in the respiratory and/or the photosynthetic chain. The immediate electron acceptor for the enzyme in this species is believed to be plastoquinone. Couples the redox reaction to proton translocation, and thus conserves the redox energy in a proton gradient. Cyanobacterial NDH-1 also plays a role in inorganic carbon-concentration. The sequence is that of NAD(P)H-quinone oxidoreductase subunit 3 from Prochlorococcus marinus (strain MIT 9215).